We begin with the raw amino-acid sequence, 231 residues long: 7-cyano-7-deazaguanine synthase (231 aa).

8 to 18 (FSGGQDSTTCL) is an ATP binding site. Residues cysteine 188, cysteine 197, cysteine 200, and cysteine 203 each contribute to the Zn(2+) site.

It belongs to the QueC family. Requires Zn(2+) as cofactor.

It catalyses the reaction 7-carboxy-7-deazaguanine + NH4(+) + ATP = 7-cyano-7-deazaguanine + ADP + phosphate + H2O + H(+). Its pathway is purine metabolism; 7-cyano-7-deazaguanine biosynthesis. In terms of biological role, catalyzes the ATP-dependent conversion of 7-carboxy-7-deazaguanine (CDG) to 7-cyano-7-deazaguanine (preQ(0)). This chain is 7-cyano-7-deazaguanine synthase, found in Sodalis glossinidius (strain morsitans).